Here is a 493-residue protein sequence, read N- to C-terminus: Monocarboxylate transporter 1 (493 aa).

Residues Met-1–Val-22 are Cytoplasmic-facing. Residues Leu-23 to Phe-44 form a helical membrane-spanning segment. Position 38 (Lys-38) interacts with (S)-lactate. The Extracellular portion of the chain corresponds to Lys-45–Thr-55. Residues Ser-56 to Val-80 traverse the membrane as a helical segment. Residues Asn-81–Gly-84 are Cytoplasmic-facing. The chain crosses the membrane as a helical span at residues Ser-85–Phe-105. The Extracellular portion of the chain corresponds to Cys-106–Val-109. The chain crosses the membrane as a helical span at residues Gln-110–Leu-132. The Cytoplasmic segment spans residues Thr-133 to Ala-146. Residues Asn-147–Phe-169 form a helical membrane-spanning segment. At Asp-170–Trp-174 the chain is on the extracellular side. A helical membrane pass occupies residues Arg-175–Leu-194. Topologically, residues Met-195 to Arg-254 are cytoplasmic. Ser-210, Ser-213, and Ser-220 each carry phosphoserine. The residue at position 224 (Thr-224) is a Phosphothreonine. Ser-230 is modified (phosphoserine). A helical transmembrane segment spans residues Gly-255 to Gly-281. Topologically, residues Lys-282–Ser-288 are extracellular. Residues Glu-289–Gly-310 traverse the membrane as a helical segment. Asp-302 contacts H(+). Position 306 (Arg-306) interacts with (S)-lactate. The Cytoplasmic segment spans residues Leu-311–Arg-321. The helical transmembrane segment at Ile-322–Leu-342 threads the bilayer. At Ser-343–Tyr-346 the chain is on the extracellular side. Residues Val-347–Phe-368 form a helical membrane-spanning segment. Residues Glu-369–Ser-382 are Cytoplasmic-facing. Residues Ala-383–Gly-403 form a helical membrane-spanning segment. Over Arg-404–Tyr-414 the chain is Extracellular. The chain crosses the membrane as a helical span at residues Thr-415–Ile-436. Topologically, residues Asn-437–Val-493 are cytoplasmic. The segment covering Ala-447–Met-472 has biased composition (basic and acidic residues). A disordered region spans residues Ala-447–Val-493. Phosphoserine is present on Ser-461. Thr-462 is modified (phosphothreonine). Residues Ala-474–Asp-485 show a composition bias toward polar residues. Phosphoserine occurs at positions 477, 482, 483, and 491.

This sequence belongs to the major facilitator superfamily. Monocarboxylate porter (TC 2.A.1.13) family. In terms of assembly, interacts with isoform 2 of BSG; interaction mediates SLC16A1 targeting to the plasma membrane. Interacts with EMB; interaction mediates SLC16A1 targeting to the plasma membrane. In terms of tissue distribution, detected in liver, brain, spinal cord, spermatozoa, muscle, white adipose tissue and brown adipose tissue (at protein level). Widely expressed, except in pancreas, where expression is not detectable.

It is found in the cell membrane. The protein resides in the basolateral cell membrane. Its subcellular location is the apical cell membrane. The catalysed reaction is (S)-lactate(in) + H(+)(in) = (S)-lactate(out) + H(+)(out). It carries out the reaction acetate(out) + H(+)(out) = acetate(in) + H(+)(in). The enzyme catalyses acetoacetate(out) + H(+)(out) = acetoacetate(in) + H(+)(in). It catalyses the reaction pyruvate(out) + H(+)(out) = pyruvate(in) + H(+)(in). The catalysed reaction is (R)-3-hydroxybutanoate(out) + H(+)(out) = (R)-3-hydroxybutanoate(in) + H(+)(in). It carries out the reaction 3-methyl-2-oxobutanoate(out) + H(+)(out) = 3-methyl-2-oxobutanoate(in) + H(+)(in). The enzyme catalyses 4-methyl-2-oxopentanoate(out) + H(+)(out) = 4-methyl-2-oxopentanoate(in) + H(+)(in). It catalyses the reaction succinate(in) + 2 H(+)(in) = succinate(out) + 2 H(+)(out). Its function is as follows. Bidirectional proton-coupled monocarboxylate transporter. Catalyzes the rapid transport across the plasma membrane of many monocarboxylates such as lactate, pyruvate, acetate and the ketone bodies acetoacetate and beta-hydroxybutyrate, and thus contributes to the maintenance of intracellular pH. The transport direction is determined by the proton motive force and the concentration gradient of the substrate monocarboxylate. MCT1 is a major lactate exporter. Plays a role in cellular responses to a high-fat diet by modulating the cellular levels of lactate and pyruvate that contribute to the regulation of central metabolic pathways and insulin secretion, with concomitant effects on plasma insulin levels and blood glucose homeostasis. Facilitates the protonated monocarboxylate form of succinate export, that its transient protonation upon muscle cell acidification in exercising muscle and ischemic heart. Functions via alternate outward- and inward-open conformation states. Protonation and deprotonation of 302-Asp is essential for the conformational transition. This is Monocarboxylate transporter 1 (Slc16a1) from Mus musculus (Mouse).